The sequence spans 751 residues: Nucleoporin NUP37 (751 aa).

One copy of the WD 1 repeat lies at 21 to 65 (SLGRRIYDVKTYPVQSPQGATILIYGHENGATVVWRGGRRLKPPK). The segment at 57–77 (GGRRLKPPKPQTNEKRNGTKP) is disordered. Residues 68–77 (TNEKRNGTKP) are compositionally biased toward basic and acidic residues. WD repeat units lie at residues 162-209 (TNDV…LTGP), 237-271 (AQAA…KPGT), 282-322 (YLPS…LPSD), and 351-390 (TSRK…PTAA). A disordered region spans residues 419-443 (EGTSPLRNPTTQKASSSSSGEFVPM). The segment covering 423 to 438 (PLRNPTTQKASSSSSG) has biased composition (polar residues). WD repeat units follow at residues 455 to 492 (AFGG…VLFL) and 494 to 534 (GADP…RMIR). Positions 671 to 692 (IPSTDAGDEETIPATSAPSSQQ) are disordered. Residues 683–692 (PATSAPSSQQ) show a composition bias toward polar residues. Residues 716–750 (RDVEQELLDIMEIDRELEQLEQARERGRKRVFFEE) are a coiled coil.

As to quaternary structure, the nuclear pore complex (NPC) constitutes the exclusive means of nucleocytoplasmic transport. NPCs allow the passive diffusion of ions and small molecules and the active, nuclear transport receptor-mediated bidirectional transport of macromolecules such as proteins, RNAs, ribonucleoparticles (RNPs), and ribosomal subunits across the nuclear envelope. The 55-60 MDa NPC is composed of at least 28 different subunits: AMO1, ELYS, GLE1, GLE2, MLP1, NDC1, NIC96, NSP1, NUP133, NUP145, NUP152, NUP159, NUP170, NUP188, NUP192, NUP37, NUP49, NUP53, NUP56, NUP57, NUP82, NUP84, NUP85, POM152, POM33, POM34, SEC13 and SEH1. Due to its 8-fold rotational symmetry, all subunits are present with 8 copies or multiples thereof.

The protein resides in the nucleus. It is found in the nuclear pore complex. The sequence is that of Nucleoporin NUP37 (NUP37) from Chaetomium thermophilum (strain DSM 1495 / CBS 144.50 / IMI 039719) (Thermochaetoides thermophila).